The following is a 54-amino-acid chain: Glutathione S-transferase 6.7 (54 aa).

It belongs to the GST superfamily. Theta family. As to quaternary structure, homodimer. The N-terminus is blocked.

The protein resides in the cytoplasm. The enzyme catalyses RX + glutathione = an S-substituted glutathione + a halide anion + H(+). Conjugation of reduced glutathione to a wide number of exogenous and endogenous hydrophobic electrophiles. In Dicentrarchus labrax (European seabass), this protein is Glutathione S-transferase 6.7.